The primary structure comprises 463 residues: Fumarate hydratase class II (463 aa).

Substrate-binding positions include 97–99 (SGT), 128–131 (HPND), 138–140 (SSN), and threonine 186. Histidine 187 acts as the Proton donor/acceptor in catalysis. The active site involves serine 317. Substrate-binding positions include serine 318 and 323–325 (KVN).

It belongs to the class-II fumarase/aspartase family. Fumarase subfamily. In terms of assembly, homotetramer.

The protein localises to the cytoplasm. It catalyses the reaction (S)-malate = fumarate + H2O. It functions in the pathway carbohydrate metabolism; tricarboxylic acid cycle; (S)-malate from fumarate: step 1/1. Involved in the TCA cycle. Catalyzes the stereospecific interconversion of fumarate to L-malate. This chain is Fumarate hydratase class II, found in Campylobacter jejuni subsp. jejuni serotype O:2 (strain ATCC 700819 / NCTC 11168).